The following is a 188-amino-acid chain: dCTP deaminase (188 aa).

DCTP is bound by residues 111 to 116, 135 to 137, Q156, Y170, and Q180; these read KSTYAR and TLE. The Proton donor/acceptor role is filled by E137.

This sequence belongs to the dCTP deaminase family. Homotrimer.

It carries out the reaction dCTP + H2O + H(+) = dUTP + NH4(+). It participates in pyrimidine metabolism; dUMP biosynthesis; dUMP from dCTP (dUTP route): step 1/2. Catalyzes the deamination of dCTP to dUTP. This chain is dCTP deaminase, found in Azotobacter vinelandii (strain DJ / ATCC BAA-1303).